The chain runs to 419 residues: UDP-N-acetylglucosamine 1-carboxyvinyltransferase (419 aa).

Residue 22 to 23 (KN) participates in phosphoenolpyruvate binding. Arg91 provides a ligand contact to UDP-N-acetyl-alpha-D-glucosamine. The active-site Proton donor is Cys115. Cys115 is subject to 2-(S-cysteinyl)pyruvic acid O-phosphothioketal. UDP-N-acetyl-alpha-D-glucosamine contacts are provided by residues 120–124 (RPVDL), 160–163 (KVSV), Asp305, and Val327.

It belongs to the EPSP synthase family. MurA subfamily.

It localises to the cytoplasm. The enzyme catalyses phosphoenolpyruvate + UDP-N-acetyl-alpha-D-glucosamine = UDP-N-acetyl-3-O-(1-carboxyvinyl)-alpha-D-glucosamine + phosphate. It participates in cell wall biogenesis; peptidoglycan biosynthesis. Functionally, cell wall formation. Adds enolpyruvyl to UDP-N-acetylglucosamine. This chain is UDP-N-acetylglucosamine 1-carboxyvinyltransferase, found in Shigella dysenteriae serotype 1 (strain Sd197).